We begin with the raw amino-acid sequence, 348 residues long: MTRLTLALDAMGGDFGPCVTVPAALQALASNPALNLLLVGDPAAITPLLAKVDSDLLSRLEVVPAESVIASDARPSQAIRASRGTSMRIALELIKDGRAQACVSAGNTGALMGLAKLLIKPLEGIERPALVSVLPHQQHGKTVVLDLGANVECDSTMLVQFAVMGSVMAEEVLELTNPRVALLNIGEEESKGLSTIREAAAQLKETPSINYIGYLEGNDLLTGKTDVMVCDGFVGNVTLKTVEGVVRMFLSLLKSPASGPEQKQKRSWWLKWLGRLLQKRLSKRFGHLNPDQYNGACLLGLRGTVIKSHGAANQRAFAVAIEQAMQTVRRQLPERIAARLEAVLPKSD.

Belongs to the PlsX family. As to quaternary structure, homodimer. Probably interacts with PlsY.

Its subcellular location is the cytoplasm. It catalyses the reaction a fatty acyl-[ACP] + phosphate = an acyl phosphate + holo-[ACP]. The protein operates within lipid metabolism; phospholipid metabolism. In terms of biological role, catalyzes the reversible formation of acyl-phosphate (acyl-PO(4)) from acyl-[acyl-carrier-protein] (acyl-ACP). This enzyme utilizes acyl-ACP as fatty acyl donor, but not acyl-CoA. The polypeptide is Phosphate acyltransferase (Pectobacterium atrosepticum (strain SCRI 1043 / ATCC BAA-672) (Erwinia carotovora subsp. atroseptica)).